The following is a 241-amino-acid chain: Probable transcriptional regulatory protein FMG_0893 (241 aa).

It belongs to the TACO1 family.

It localises to the cytoplasm. This Finegoldia magna (strain ATCC 29328 / DSM 20472 / WAL 2508) (Peptostreptococcus magnus) protein is Probable transcriptional regulatory protein FMG_0893.